The following is a 272-amino-acid chain: Dermonecrotic toxin LvSicTox-alphaIC1bi (272 aa).

Residue H5 is part of the active site. The Mg(2+) site is built by E25 and D27. The Nucleophile role is filled by H41. 2 disulfides stabilise this stretch: C45/C51 and C47/C189. D84 is a binding site for Mg(2+).

It belongs to the arthropod phospholipase D family. Class II subfamily. It depends on Mg(2+) as a cofactor. Expressed by the venom gland.

Its subcellular location is the secreted. The catalysed reaction is an N-(acyl)-sphingosylphosphocholine = an N-(acyl)-sphingosyl-1,3-cyclic phosphate + choline. It carries out the reaction an N-(acyl)-sphingosylphosphoethanolamine = an N-(acyl)-sphingosyl-1,3-cyclic phosphate + ethanolamine. It catalyses the reaction a 1-acyl-sn-glycero-3-phosphocholine = a 1-acyl-sn-glycero-2,3-cyclic phosphate + choline. The enzyme catalyses a 1-acyl-sn-glycero-3-phosphoethanolamine = a 1-acyl-sn-glycero-2,3-cyclic phosphate + ethanolamine. Its function is as follows. Dermonecrotic toxins cleave the phosphodiester linkage between the phosphate and headgroup of certain phospholipids (sphingolipid and lysolipid substrates), forming an alcohol (often choline) and a cyclic phosphate. This toxin acts on sphingomyelin (SM). It may also act on ceramide phosphoethanolamine (CPE), lysophosphatidylcholine (LPC) and lysophosphatidylethanolamine (LPE), but not on lysophosphatidylserine (LPS), and lysophosphatidylglycerol (LPG). It acts by transphosphatidylation, releasing exclusively cyclic phosphate products as second products. Induces dermonecrosis, hemolysis, increased vascular permeability, edema, inflammatory response, and platelet aggregation. The chain is Dermonecrotic toxin LvSicTox-alphaIC1bi from Loxosceles variegata (Recluse spider).